Reading from the N-terminus, the 128-residue chain is Large ribosomal subunit protein mL52 (128 aa).

Residues 1–28 (MLQIAKLCLATSGRITAQRYVAVTTARA) constitute a mitochondrion transit peptide.

This sequence belongs to the mitochondrion-specific ribosomal protein mL52 family. In terms of assembly, component of the mitochondrial ribosome large subunit (39S) which comprises a 16S rRNA and about 50 distinct proteins.

The protein resides in the mitochondrion. The polypeptide is Large ribosomal subunit protein mL52 (mRpL52) (Drosophila pseudoobscura pseudoobscura (Fruit fly)).